The primary structure comprises 169 residues: Mediator of RNA polymerase II transcription subunit 28 (169 aa).

Residues 1–35 are disordered; the sequence is MFSAQQPGPPPPNQPGAPAGLMSTPPGAKNPSSTL. Residues 99–137 adopt a coiled-coil conformation; it reads EQVIKEDVSELRNELQRKEALIQKHLTKLRSWQQVLEEI.

This sequence belongs to the Mediator complex subunit 28 family. Component of the Mediator complex.

The protein localises to the nucleus. Its function is as follows. Component of the Mediator complex, a coactivator involved in the regulated transcription of nearly all RNA polymerase II-dependent genes. Mediator functions as a bridge to convey information from gene-specific regulatory proteins to the basal RNA polymerase II transcription machinery. Mediator is recruited to promoters by direct interactions with regulatory proteins and serves as a scaffold for the assembly of a functional preinitiation complex with RNA polymerase II and the general transcription factors. The polypeptide is Mediator of RNA polymerase II transcription subunit 28 (med28) (Xenopus tropicalis (Western clawed frog)).